The primary structure comprises 182 residues: MQLSELRENMQKTIEATQRSFNTLRTGRASASLLDRITVEYYGAETPLKSLASISTPDSSTIMIQPFDRGSLSDVERAISMSDLGLTPNNDGTNIRLNIPPLTKERRQELVKTAGKLAEEGKVALRNIRRDAIDDVRKQEKNSDISEDESRSLQDDIQKVTDEFTTKIDDLLKIKEKDIMTV.

Belongs to the RRF family.

It is found in the cytoplasm. Functionally, responsible for the release of ribosomes from messenger RNA at the termination of protein biosynthesis. May increase the efficiency of translation by recycling ribosomes from one round of translation to another. This is Ribosome-recycling factor from Picosynechococcus sp. (strain ATCC 27264 / PCC 7002 / PR-6) (Agmenellum quadruplicatum).